The following is a 434-amino-acid chain: Trigger factor (434 aa).

The PPIase FKBP-type domain occupies 161–246 (KDIVTIDFKG…IHKVEEPQLP (86 aa)).

It belongs to the FKBP-type PPIase family. Tig subfamily.

It localises to the cytoplasm. It carries out the reaction [protein]-peptidylproline (omega=180) = [protein]-peptidylproline (omega=0). Functionally, involved in protein export. Acts as a chaperone by maintaining the newly synthesized protein in an open conformation. Functions as a peptidyl-prolyl cis-trans isomerase. This is Trigger factor from Marinobacter nauticus (strain ATCC 700491 / DSM 11845 / VT8) (Marinobacter aquaeolei).